Consider the following 187-residue polypeptide: MPHSTADRRLRLTRQALLAAAVAPLLAGCALVMHKPHSAGSSNPWDDSAHPLTDDQAMAQVVEPAKQIVAAADLQAVRAGFSFTSCNDQGDPPYQGTVRMAFLLQGDHDAYFQHVRAAMLSHGWIDGPPPGQYFHGITLHKNGVTANMSLALDHSYGEMILDGECRNTTDHHHDDETTNITNQLVQP.

The N-terminal stretch at 1–28 (MPHSTADRRLRLTRQALLAAAVAPLLAG) is a signal peptide. Cys29 carries the N-palmitoyl cysteine lipid modification. The S-diacylglycerol cysteine moiety is linked to residue Cys29.

It localises to the cell membrane. This is Putative lipoprotein LppJ (lppJ) from Mycobacterium bovis (strain ATCC BAA-935 / AF2122/97).